A 150-amino-acid chain; its full sequence is Early 4 ORF6/7 control protein (150 aa).

The disordered stretch occupies residues 1 to 31; that stretch reads MTTSGVPFGMTLRPTRSRLSRRTPYSRDRLP. The short motif at 1–58 is the Nuclear localization signal element; it reads MTTSGVPFGMTLRPTRSRLSRRTPYSRDRLPPFETETRATILEDHPLLPECNTLTMHN.

Belongs to the adenoviridae E4-orf6/7 family. In terms of assembly, interacts with host E2F proteins.

It localises to the host nucleus. Its function is as follows. Modulates viral and host transcriptional activity to promote viral genome replication. Stimulates viral E2a promoter activity by binding and inducing dimerization of host E2F. During viral infection E1A protein binds to cellular retinablastoma (RB) family members and dissociates these repressors from a complex with E2F proteins. Free E2F is then bound to E4orf6/7 which leads to transactivation of viral E2 promoter, and cellular promoters such as E2F-1 promoter. Activation of cellular E2F targets promote cell cycle S phase and thereby possibly favorises viral DNA replication process. The sequence is that of Early 4 ORF6/7 control protein from Human adenovirus C serotype 2 (HAdV-2).